We begin with the raw amino-acid sequence, 276 residues long: Hydroxyethylthiazole kinase (276 aa).

Residues R126 and S172 each contribute to the ATP site. G199 is a substrate binding site.

It belongs to the Thz kinase family. Requires Mg(2+) as cofactor.

The catalysed reaction is 5-(2-hydroxyethyl)-4-methylthiazole + ATP = 4-methyl-5-(2-phosphooxyethyl)-thiazole + ADP + H(+). The protein operates within cofactor biosynthesis; thiamine diphosphate biosynthesis; 4-methyl-5-(2-phosphoethyl)-thiazole from 5-(2-hydroxyethyl)-4-methylthiazole: step 1/1. In terms of biological role, catalyzes the phosphorylation of the hydroxyl group of 4-methyl-5-beta-hydroxyethylthiazole (THZ). In Burkholderia pseudomallei (strain 1106a), this protein is Hydroxyethylthiazole kinase.